A 146-amino-acid polypeptide reads, in one-letter code: MSSQGKQYEYLDHTADIKFQAYGKTREEVFENAALAMFNVIIDTKKISGDTAREIFLKSPDLESLLVDWLSELLYLFEVDEIVFREFRVDNIREENGEYSITAQALGEKYDLKSLPFETEIKAVTYNQLEITKTADGWKAQVVVDI.

3 residues coordinate Ca(2+): Asp16, Asp145, and Ile146.

The protein belongs to the archease family.

Activates the tRNA-splicing ligase complex by facilitating the enzymatic turnover of catalytic subunit RtcB. Acts by promoting the guanylylation of RtcB, a key intermediate step in tRNA ligation. Can also alter the NTP specificity of RtcB such that ATP, dGTP or ITP is used efficiently. This chain is Protein archease, found in Methanosarcina barkeri (strain Fusaro / DSM 804).